Reading from the N-terminus, the 124-residue chain is Fluoride-specific ion channel FluC (124 aa).

A run of 4 helical transmembrane segments spans residues 3-23 (VLLI…VSNL), 34-54 (IGTL…FIFI), 68-88 (LLLI…IETF), and 100-120 (ALNV…GVLI). Glycine 75 and threonine 78 together coordinate Na(+).

It belongs to the fluoride channel Fluc/FEX (TC 1.A.43) family.

Its subcellular location is the cell inner membrane. It catalyses the reaction fluoride(in) = fluoride(out). Na(+) is not transported, but it plays an essential structural role and its presence is essential for fluoride channel function. Its function is as follows. Fluoride-specific ion channel. Important for reducing fluoride concentration in the cell, thus reducing its toxicity. In Coxiella burnetii (strain Dugway 5J108-111), this protein is Fluoride-specific ion channel FluC.